A 48-amino-acid chain; its full sequence is Cuticle protein 6 isoform b (48 aa).

The polypeptide is Cuticle protein 6 isoform b (Limulus polyphemus (Atlantic horseshoe crab)).